Reading from the N-terminus, the 299-residue chain is Heat stress transcription factor B-2a (299 aa).

Residues 21–115 (PTPFLTKTFN…LLREIQRRKI (95 aa)) mediate DNA binding. Residues 119–157 (HQTVVAPSSEQRNQTMVVSPSNSGEDNNNNQVMSSSPSS) are disordered. The hydrophobic repeat HR-A/B stretch occupies residues 166-211 (TGNGGLSVELLEENEKLRSQNIQLNRELTQMKSICDNIYSLMSNYV). The Nuclear localization signal signature appears at 261-264 (KRTR).

The protein belongs to the HSF family. Class B subfamily. As to quaternary structure, homotrimer. Exhibits temperature-dependent phosphorylation.

The protein resides in the nucleus. In terms of biological role, transcriptional regulator that specifically binds DNA sequence 5'-AGAAnnTTCT-3' known as heat shock promoter elements (HSE). The protein is Heat stress transcription factor B-2a (HSFB2A) of Arabidopsis thaliana (Mouse-ear cress).